Here is a 211-residue protein sequence, read N- to C-terminus: Pyruvate dehydrogenase E1 component subunit beta, mitochondrial (211 aa).

Tyrosine 31 is subject to Phosphotyrosine. Isoleucine 48, alanine 96, isoleucine 97, aspartate 99, and asparagine 101 together coordinate K(+).

In terms of assembly, heterotetramer of two PDHA1 and two PDHB subunits. The heterotetramer interacts with DLAT, and is part of the multimeric pyruvate dehydrogenase complex that contains multiple copies of pyruvate dehydrogenase (E1), dihydrolipoamide acetyltransferase (DLAT, E2) and lipoamide dehydrogenase (DLD, E3). These subunits are bound to an inner core composed of about 48 DLAT and 12 PDHX molecules. Interacts with DLAT. It depends on thiamine diphosphate as a cofactor.

The protein localises to the mitochondrion matrix. The enzyme catalyses N(6)-[(R)-lipoyl]-L-lysyl-[protein] + pyruvate + H(+) = N(6)-[(R)-S(8)-acetyldihydrolipoyl]-L-lysyl-[protein] + CO2. The pyruvate dehydrogenase complex catalyzes the overall conversion of pyruvate to acetyl-CoA and CO(2), and thereby links the glycolytic pathway to the tricarboxylic cycle. In Mesocricetus auratus (Golden hamster), this protein is Pyruvate dehydrogenase E1 component subunit beta, mitochondrial.